A 262-amino-acid chain; its full sequence is Small ribosomal subunit protein eS4A (262 aa).

Positions 42 to 105 constitute an S4 RNA-binding domain; it reads LPLIVFLRNR…GEHFRLVYDI (64 aa).

This sequence belongs to the eukaryotic ribosomal protein eS4 family. Component of the small ribosomal subunit (SSU). Mature yeast ribosomes consist of a small (40S) and a large (60S) subunit. The 40S small subunit contains 1 molecule of ribosomal RNA (18S rRNA) and at least 33 different proteins. The large 60S subunit contains 3 rRNA molecules (25S, 5.8S and 5S rRNA) and at least 46 different proteins.

The protein resides in the cytoplasm. In terms of biological role, component of the ribosome, a large ribonucleoprotein complex responsible for the synthesis of proteins in the cell. The small ribosomal subunit (SSU) binds messenger RNAs (mRNAs) and translates the encoded message by selecting cognate aminoacyl-transfer RNA (tRNA) molecules. The large subunit (LSU) contains the ribosomal catalytic site termed the peptidyl transferase center (PTC), which catalyzes the formation of peptide bonds, thereby polymerizing the amino acids delivered by tRNAs into a polypeptide chain. The nascent polypeptides leave the ribosome through a tunnel in the LSU and interact with protein factors that function in enzymatic processing, targeting, and the membrane insertion of nascent chains at the exit of the ribosomal tunnel. This Schizosaccharomyces pombe (strain 972 / ATCC 24843) (Fission yeast) protein is Small ribosomal subunit protein eS4A (rps401).